The sequence spans 195 residues: dTTP/UTP pyrophosphatase (195 aa).

The Proton acceptor role is filled by D73.

This sequence belongs to the Maf family. YhdE subfamily. The cofactor is a divalent metal cation.

It is found in the cytoplasm. It carries out the reaction dTTP + H2O = dTMP + diphosphate + H(+). The catalysed reaction is UTP + H2O = UMP + diphosphate + H(+). Its function is as follows. Nucleoside triphosphate pyrophosphatase that hydrolyzes dTTP and UTP. May have a dual role in cell division arrest and in preventing the incorporation of modified nucleotides into cellular nucleic acids. The polypeptide is dTTP/UTP pyrophosphatase (Exiguobacterium sibiricum (strain DSM 17290 / CCUG 55495 / CIP 109462 / JCM 13490 / 255-15)).